The chain runs to 423 residues: Histone deacetylase 14, chloroplastic (423 aa).

Residues 1 to 44 (MSMALIVRPFFVPGSAGISGSRNICKKNQWRKYLLKPSGSSINC) constitute a chloroplast transit peptide. The tract at residues 62–392 (DARLIYSVSA…FRALLGEDSL (331 aa)) is histone deacetylase. The active-site Proton donor/acceptor is H202. Zn(2+)-binding residues include D239, H241, and D326.

It belongs to the histone deacetylase family. Interacts with PP2A2. The cofactor is Zn(2+). As to expression, expressed in stems, leaves, flowers, siliques and mature seeds.

Its subcellular location is the nucleus. It localises to the cytoplasm. The protein resides in the plastid. The protein localises to the chloroplast stroma. It is found in the mitochondrion. It carries out the reaction N-acetylserotonin + H2O = serotonin + acetate. The catalysed reaction is N-acetyltyramine + H2O = tyramine + acetate. The enzyme catalyses N-acetyltryptamine + H2O = tryptamine + acetate. It catalyses the reaction melatonin + H2O = 5-methoxytryptamine + acetate. Its activity is regulated as follows. Its activity is inhibited by trichostatin A (TSA), a known histone deacetylase inhibitor. Its function is as follows. Regulates lysine acetylation levels of plastid proteins related to photosynthesis. Involved in the regulation of the activation state of RuBisCO, which is controlled by lysine acetylation of RuBisCO activase under low-light conditions. Associates with alpha- and beta-tubulins and deacetylate alpha-tubulin. Does not seem to be required for the cellular patterning in the root epidermis. Involved in the regulation of melatonin biosynthesis by catalyzing the deacetylation of N-acetylserotonin to produce serotonin. N-acetylserotonin is methylated by acetylserotonin O-methyltransferase (ASMT) to produce melatonin (N-acetyl-5-methoxytryptamine). Deacetylates melatonin to produce 5-methoxytryptamine. In vitro, deacetylates N-acetyltyramine and N-acetyltryptamine to produce tyramine and tryptamine, respectively. This Arabidopsis thaliana (Mouse-ear cress) protein is Histone deacetylase 14, chloroplastic.